The primary structure comprises 529 residues: Bifunctional purine biosynthesis protein PurH (529 aa).

Positions 1–148 (MQQRRPVRRA…KNHKDVAIVV (148 aa)) constitute an MGS-like domain.

The protein belongs to the PurH family.

It carries out the reaction (6R)-10-formyltetrahydrofolate + 5-amino-1-(5-phospho-beta-D-ribosyl)imidazole-4-carboxamide = 5-formamido-1-(5-phospho-D-ribosyl)imidazole-4-carboxamide + (6S)-5,6,7,8-tetrahydrofolate. It catalyses the reaction IMP + H2O = 5-formamido-1-(5-phospho-D-ribosyl)imidazole-4-carboxamide. Its pathway is purine metabolism; IMP biosynthesis via de novo pathway; 5-formamido-1-(5-phospho-D-ribosyl)imidazole-4-carboxamide from 5-amino-1-(5-phospho-D-ribosyl)imidazole-4-carboxamide (10-formyl THF route): step 1/1. It participates in purine metabolism; IMP biosynthesis via de novo pathway; IMP from 5-formamido-1-(5-phospho-D-ribosyl)imidazole-4-carboxamide: step 1/1. This is Bifunctional purine biosynthesis protein PurH from Citrobacter koseri (strain ATCC BAA-895 / CDC 4225-83 / SGSC4696).